A 790-amino-acid polypeptide reads, in one-letter code: Cadherin-20 (790 aa).

The signal sequence occupies residues 1-25 (MSCKRSYHRHCALVYYMVLLDLTNA). Residues 26–52 (VFEFSHPLIRDSGNSQSRQLLHHRLKR) constitute a propeptide that is removed on maturation. Topologically, residues 26–612 (VFEFSHPLIR…PYTLPISLSR (587 aa)) are extracellular. Cadherin domains are found at residues 54-158 (WVWN…EPKF), 159-267 (LDGP…PPRF), 268-382 (PQKH…PPVF), 383-487 (GSSF…APTF), and 487-605 (FTKF…EPYT). N-linked (GlcNAc...) asparagine glycans are attached at residues Asn-254, Asn-283, Asn-413, Asn-454, and Asn-535. A helical membrane pass occupies residues 613 to 633 (GALIAILTCIFVLLVLVLLIL). Residues 634–790 (SMRRHRKQPY…YGTKDNNGSL (157 aa)) are Cytoplasmic-facing.

Detected in embryonic posterior neural plate, embryonic neural tube, sulcus limitans and embryonic kidney.

The protein localises to the cell membrane. Cadherins are calcium-dependent cell adhesion proteins. They preferentially interact with themselves in a homophilic manner in connecting cells; cadherins may thus contribute to the sorting of heterogeneous cell types. The protein is Cadherin-20 (cdh20) of Xenopus laevis (African clawed frog).